We begin with the raw amino-acid sequence, 259 residues long: Ras-related protein Rab-34 (259 aa).

Met1 carries the post-translational modification N-acetylmethionine. GTP is bound by residues Ser62, Val63, Gly64, Lys65, Thr66, Asp78, Tyr81, and Thr84. Thr66 is a Mg(2+) binding site. Positions 71 to 89 (RFCKDTFDKNYKATIGVDF) match the Switch 1 motif. Thr84 and Asp107 together coordinate Mg(2+). A Switch 2 motif is present at residues 108-127 (TAGQERFKCIASTYYRGAQA). Residues Gly110, Lys167, Asp169, and Ser198 each coordinate GTP. Residues Ser241 and Ser244 each carry the phosphoserine modification. Residues Cys257 and Cys258 are each lipidated (S-geranylgeranyl cysteine).

It belongs to the small GTPase superfamily. Rab family. Interacts with RILP. The GTP-bound form interacts with REP15. It depends on Mg(2+) as a cofactor.

It localises to the cytoplasm. The protein localises to the golgi apparatus. Its subcellular location is the cytoplasmic vesicle. It is found in the phagosome. The protein resides in the phagosome membrane. It localises to the cell projection. The protein localises to the cilium. Its subcellular location is the cytoskeleton. It is found in the microtubule organizing center. The protein resides in the centrosome. It localises to the centriole. The enzyme catalyses GTP + H2O = GDP + phosphate + H(+). Its activity is regulated as follows. Regulated by guanine nucleotide exchange factors (GEFs) which promote the exchange of bound GDP for free GTP. Regulated by GTPase activating proteins (GAPs) which increase the GTP hydrolysis activity. Inhibited by GDP dissociation inhibitors (GDIs). Its function is as follows. The small GTPases Rab are key regulators of intracellular membrane trafficking, from the formation of transport vesicles to their fusion with membranes. Rabs cycle between an inactive GDP-bound form and an active GTP-bound form that is able to recruit to membranes different sets of downstream effectors directly responsible for vesicle formation, movement, tethering and fusion. RAB34 transports protein involved in the redistribution of lysosomes to the peri-Golgi region. Plays a role in the maturation of phagosomes that engulf pathogens, such as S.aureus and M.tuberculosis. Plays a role in the fusion of phagosomes with lysosomes. Involved in ciliogenesis. In particular, it is required for early steps of the intracellular cilium assembly pathway initiated by trafficking and docking of ciliary vesicles to the centrioles in the cytoplasm, followed by axoneme formation in the cytoplasm. After axoneme elongation, the centrioles migrate close to the cell surface so that ciliary vesicles can fuse with the plasma membrane to expose cilia to the extracellular space. It seems dispensable for ciliogenesis via the extracellular pathway where cilium assembly begins after migration and docking of the centriole to the plasma membrane. Also acts as a positive regulator of hedgehog signaling and regulates ciliary function. The chain is Ras-related protein Rab-34 from Homo sapiens (Human).